A 358-amino-acid chain; its full sequence is CX3C chemokine receptor 1 (358 aa).

The Extracellular segment spans residues 1–26 (MHTTLPESTSENFEYYDLAEACDMGD). Residues 27 to 47 (IVALGTVFVVILYSLVFAFGL) form a helical membrane-spanning segment. Residues 48-68 (VGNLLVVFALINSQRSKSITD) lie on the Cytoplasmic side of the membrane. Residues 69–89 (IYLLNLALSDLLFVATLPFWT) traverse the membrane as a helical segment. The Extracellular portion of the chain corresponds to 90 to 105 (HYVINEQGLHHATCKL). Cysteines 103 and 176 form a disulfide. The chain crosses the membrane as a helical span at residues 106-126 (ITAFFFIGFFGGIFFITVISV). Residues 127 to 147 (DRFLAIVLAANSMSNRTVQHG) lie on the Cytoplasmic side of the membrane. A helical transmembrane segment spans residues 148–168 (VTTSLGVWAAAILVATPQFMF). Topologically, residues 169–186 (TREKENECFGDYPEILQE) are extracellular. A helical transmembrane segment spans residues 187-207 (IWPVILNTEINFLGFLLPLLI). Topologically, residues 208-232 (MSYCYFRIMQTLFSCKNHKKAKAIR) are cytoplasmic. Residues 233-253 (LIFLVVVVFFLFWTPYNVMIF) traverse the membrane as a helical segment. At 254-275 (LQTLNLYDFFPKCDVKRDLKLA) the chain is on the extracellular side. Residues 276–296 (ISVTETIAFSHCCLNPLIYAF) traverse the membrane as a helical segment. At 297–358 (AGEKFRRYLY…TSDGDASILL (62 aa)) the chain is on the cytoplasmic side. The residue at position 349 (Thr349) is a Phosphothreonine.

This sequence belongs to the G-protein coupled receptor 1 family. In terms of assembly, found in a ternary complex with CX3CL1 and ITGAV:ITGB3 or ITGA4:ITGB1. Post-translationally, this protein is not N-glycosylated which is unusual for G-protein-coupled receptors.

It localises to the cell membrane. In terms of biological role, receptor for the C-X3-C chemokine fractalkine (CX3CL1) present on many early leukocyte cells; CX3CR1-CX3CL1 signaling exerts distinct functions in different tissue compartments, such as immune response, inflammation, cell adhesion and chemotaxis. CX3CR1-CX3CL1 signaling mediates cell migratory functions. Responsible for the recruitment of natural killer (NK) cells to inflamed tissues. Acts as a regulator of inflammation process leading to atherogenesis by mediating macrophage and monocyte recruitment to inflamed atherosclerotic plaques, promoting cell survival. Involved in airway inflammation by promoting interleukin 2-producing T helper (Th2) cell survival in inflamed lung. Involved in the migration of circulating monocytes to non-inflamed tissues, where they differentiate into macrophages and dendritic cells. Acts as a negative regulator of angiogenesis, probably by promoting macrophage chemotaxis. Plays a key role in brain microglia by regulating inflammatory response in the central nervous system (CNS) and regulating synapse maturation. Required to restrain the microglial inflammatory response in the CNS and the resulting parenchymal damage in response to pathological stimuli. Involved in brain development by participating in synaptic pruning, a natural process during which brain microglia eliminates extra synapses during postnatal development. Synaptic pruning by microglia is required to promote the maturation of circuit connectivity during brain development. Acts as an important regulator of the gut microbiota by controlling immunity to intestinal bacteria and fungi. Expressed in lamina propria dendritic cells in the small intestine, which form transepithelial dendrites capable of taking up bacteria in order to provide defense against pathogenic bacteria. Required to initiate innate and adaptive immune responses against dissemination of commensal fungi (mycobiota) component of the gut: expressed in mononuclear phagocytes (MNPs) and acts by promoting induction of antifungal IgG antibodies response to confer protection against disseminated C.albicans or C.auris infection. Also acts as a receptor for C-C motif chemokine CCL26, inducing cell chemotaxis. The sequence is that of CX3C chemokine receptor 1 from Bos taurus (Bovine).